The sequence spans 265 residues: Di-trans,poly-cis-undecaprenyl-diphosphate synthase (265 aa).

Positions 236-238 (RFG) match the RXG motif; crucial for prenyltransferase activity motif.

It belongs to the UPP synthase family. The cofactor is Mg(2+).

It catalyses the reaction 8 isopentenyl diphosphate + (2E,6E)-farnesyl diphosphate = di-trans,octa-cis-undecaprenyl diphosphate + 8 diphosphate. The protein operates within protein modification; protein glycosylation. Its pathway is lipid metabolism. In terms of biological role, cis-prenyl transferase involved in the synthesis of dolichol, a long-chain polyprenol that is utilized as a sugar carrier in protein glycosylation in the endoplasmic reticulum (ER). Catalyzes the sequential condensation of isopentenyl pyrophosphate (IPP) with farnesyl pyrophosphate (FPP) to produce a polyprenyl pyrophosphate which contains 11 (major) and 12 (minor) isoprene units. The chain is Di-trans,poly-cis-undecaprenyl-diphosphate synthase from Giardia intestinalis (strain ATCC 50803 / WB clone C6) (Giardia lamblia).